A 155-amino-acid chain; its full sequence is Aspartate carbamoyltransferase regulatory chain (155 aa).

The Zn(2+) site is built by cysteine 109, cysteine 114, cysteine 138, and cysteine 141.

This sequence belongs to the PyrI family. As to quaternary structure, contains catalytic and regulatory chains. It depends on Zn(2+) as a cofactor.

Functionally, involved in allosteric regulation of aspartate carbamoyltransferase. This is Aspartate carbamoyltransferase regulatory chain from Vibrio cholerae serotype O1 (strain ATCC 39315 / El Tor Inaba N16961).